The sequence spans 182 residues: GTP cyclohydrolase 1 (182 aa).

Cys-73, His-76, and Cys-144 together coordinate Zn(2+).

Belongs to the GTP cyclohydrolase I family. Homomer.

It catalyses the reaction GTP + H2O = 7,8-dihydroneopterin 3'-triphosphate + formate + H(+). Its pathway is cofactor biosynthesis; 7,8-dihydroneopterin triphosphate biosynthesis; 7,8-dihydroneopterin triphosphate from GTP: step 1/1. The chain is GTP cyclohydrolase 1 from Hydrogenobaculum sp. (strain Y04AAS1).